The sequence spans 1502 residues: tRNA (32-2'-O)-methyltransferase regulator trm732 (1502 aa).

It belongs to the THADA family.

The protein resides in the cytoplasm. It is found in the nucleus. Functionally, together with methyltransferase trm7, methylates the 2'-O-ribose of nucleotides at position 32 of the anticodon loop of substrate tRNAs. The sequence is that of tRNA (32-2'-O)-methyltransferase regulator trm732 from Schizosaccharomyces pombe (strain 972 / ATCC 24843) (Fission yeast).